The primary structure comprises 539 residues: Hydroxylamine reductase (539 aa).

Cys-3, Cys-6, Cys-13, and Cys-19 together coordinate [4Fe-4S] cluster. Residues His-240, Glu-264, Cys-308, Cys-395, Cys-423, Cys-448, Glu-482, and Lys-484 each contribute to the hybrid [4Fe-2O-2S] cluster site. Cys-395 is modified (cysteine persulfide).

This sequence belongs to the HCP family. It depends on [4Fe-4S] cluster as a cofactor. Requires hybrid [4Fe-2O-2S] cluster as cofactor.

The protein localises to the cytoplasm. The enzyme catalyses A + NH4(+) + H2O = hydroxylamine + AH2 + H(+). Its function is as follows. Catalyzes the reduction of hydroxylamine to form NH(3) and H(2)O. In Thermodesulfovibrio yellowstonii (strain ATCC 51303 / DSM 11347 / YP87), this protein is Hydroxylamine reductase.